Reading from the N-terminus, the 219-residue chain is MGQKINPLGFRLGTTQGHHSLWFAQPKNYSEGLQEDQKIRDFIKNYVQKNMKISSSVEGIARIEIQKRIDLIQVIIYMGFPKLLIESRPRGIEELQMNLQKEFKSVNQKLNIAITRIAKPYGSPNILAEFIAGQLKNRVSFRKAMKKAIELTEQADTKGIQVQIAGRIDGKEIARVEWIREGRVPLQTIRAKIDYCSYTVRTIYGVLGIKIWIFIDGEE.

The region spanning 43–118 is the KH type-2 domain; sequence IKNYVQKNMK…KLNIAITRIA (76 aa).

The protein belongs to the universal ribosomal protein uS3 family. Part of the 30S ribosomal subunit.

The protein resides in the plastid. The protein localises to the chloroplast. The sequence is that of Small ribosomal subunit protein uS3c (rps3) from Panax ginseng (Korean ginseng).